Consider the following 1482-residue polypeptide: Glutamate receptor ionotropic, NMDA 2B (1482 aa).

The first 26 residues, 1–26 (MKPSAECCSPKFWLVLAVLAVSGSKA), serve as a signal peptide directing secretion. Residues 27–557 (RSQKSPPSIG…SAFLEPFSAD (531 aa)) are Extracellular-facing. A glycan (N-linked (GlcNAc...) asparagine) is linked at N74. C86 and C321 form a disulfide bridge. Residues H127 and E284 each contribute to the Zn(2+) site. N-linked (GlcNAc...) asparagine glycosylation is found at N341, N348, N444, and N491. Cystine bridges form between C429–C456 and C436–C457. L-glutamate contacts are provided by T514 and R519. Residue N542 is glycosylated (N-linked (GlcNAc...) asparagine). The chain crosses the membrane as a helical span at residues 558 to 576 (VWVMMFVMLLIVSAVAVFV). At 577–603 (FEYFSPVGYNRCLADGREPGGPSFTIG) the chain is on the cytoplasmic side. An intramembrane region (discontinuously helical) is located at residues 604-623 (KAIWLLWGLVFNNSVPVQNP). The segment at 604 to 623 (KAIWLLWGLVFNNSVPVQNP) is pore-forming. The Cytoplasmic portion of the chain corresponds to 624–630 (KGTTSKI). A helical transmembrane segment spans residues 631–646 (MVSVWAFFAVIFLASY). Over 647 to 817 (TANLAAFMIQ…VMSSQLDIDN (171 aa)) the chain is Extracellular. N-linked (GlcNAc...) asparagine glycosylation is present at N688. L-glutamate-binding residues include S690, T691, and D732. The cysteines at positions 746 and 801 are disulfide-linked. A helical transmembrane segment spans residues 818-837 (MAGVFYMLGAAMALSLITFI). Residues 838-1482 (CEHLFYWQFR…EKLSSIESDV (645 aa)) are Cytoplasmic-facing. A phosphoserine mark is found at S882, S886, S917, and S920. 2 positions are modified to phosphotyrosine: Y962 and Y1039. Phosphoserine occurs at positions 1058, 1061, and 1064. Y1109 and Y1133 each carry phosphotyrosine. A Phosphoserine modification is found at S1143. Phosphotyrosine is present on Y1155. Residues 1161–1194 (DFKRDSVSGGGPCTNRSHLKHGTGEKHGVVGGVP) form a disordered region. Residues S1255 and S1259 each carry the phosphoserine modification. Residues 1269–1301 (PVAVTSNASSTKYPQSPTNSKAQKKNRNKLRRQ) form a disordered region. Residues 1272-1289 (VTSNASSTKYPQSPTNSK) show a composition bias toward polar residues. Residues 1290–1301 (AQKKNRNKLRRQ) show a composition bias toward basic residues. The tract at residues 1292–1304 (KKNRNKLRRQHSY) is interaction with DAPK1. A Phosphoserine modification is found at S1303. Y1472 is subject to Phosphotyrosine. The short motif at 1480–1482 (SDV) is the PDZ-binding element.

It belongs to the glutamate-gated ion channel (TC 1.A.10.1) family. NR2B/GRIN2B subfamily. In terms of assembly, heterotetramer. Forms heterotetrameric channels composed of two GluN1/zeta subunits (GRIN1), and two identical GluN2/epsilon subunits (GRIN2A, GRIN2B, GRIN2C or GRIN2D) or GluN3 subunits (GRIN3A or GRIN3B) (in vitro). Can also form heterotetrameric channels that contain at least two GluN1 subunits and at least two different GluN2 subunits (or a combination of one GluN2 and one GluN3 subunits) (in vitro). In vivo, the subunit composition may depend on the expression levels of the different subunits. Found in a complex with GRIN1, GRIN3A and PPP2CB. Found in a complex with GRIN1 and GRIN3B. Interacts with MAGI3. Interacts with HIP1 and NETO1. Interacts with PDZ domains of PATJ, DLG3 and DLG4. Interacts with DAPK1. Found in a complex with GRIN1 and PRR7. Interacts with PRR7. Interacts with CAMK2A. Interacts with ARC; preventing ARC oligomerization. Interacts with TMEM25. Interacts (via the extreme C-terminus) with FRMPD2 (via the second PDZ domain); the interaction is direct and is likely to promote NMDAR-mediated neural signal transmission. Interacts with FAM81A; the interaction facilitates condensate formation via liquid-liquid phase separation. In terms of processing, phosphorylated on tyrosine residues. Phosphorylation at Ser-1303 by DAPK1 enhances synaptic NMDA receptor channel activity. In terms of tissue distribution, expressed in the hippocampus including the dentate gyrus (at protein level). Detected in adult olfactory bulb, brain cortex, hippocampus, striatum, thalamus, superior colliculus, with much lower levels in inferior colliculus, midbrain and cerebellum.

The protein localises to the cell membrane. Its subcellular location is the postsynaptic cell membrane. The protein resides in the late endosome. It is found in the lysosome. It localises to the cytoplasm. The protein localises to the cytoskeleton. The enzyme catalyses Ca(2+)(in) = Ca(2+)(out). The catalysed reaction is Na(+)(in) = Na(+)(out). It carries out the reaction K(+)(in) = K(+)(out). NMDA glutamate receptor activity is inhibited by micromolar levels of zinc ions. NMDA glutamate receptor activity is inhibited by ifenprodil. In terms of biological role, component of N-methyl-D-aspartate (NMDA) receptors (NMDARs) that function as heterotetrameric, ligand-gated cation channels with high calcium permeability and voltage-dependent block by Mg(2+). Participates in synaptic plasticity for learning and memory formation by contributing to the long-term depression (LTD) of hippocampus membrane currents. Channel activation requires binding of the neurotransmitter L-glutamate to the GluN2 subunit, glycine or D-serine binding to the GluN1 subunit, plus membrane depolarization to eliminate channel inhibition by Mg(2+). NMDARs mediate simultaneously the potasium efflux and the influx of calcium and sodium. Each GluN2 subunit confers differential attributes to channel properties, including activation, deactivation and desensitization kinetics, pH sensitivity, Ca2(+) permeability, and binding to allosteric modulators. In concert with DAPK1 at extrasynaptic sites, acts as a central mediator for stroke damage. Its phosphorylation at Ser-1303 by DAPK1 enhances synaptic NMDA receptor channel activity inducing injurious Ca2+ influx through them, resulting in an irreversible neuronal death. The polypeptide is Glutamate receptor ionotropic, NMDA 2B (Rattus norvegicus (Rat)).